The following is a 262-amino-acid chain: Troponin T, slow skeletal muscle (262 aa).

The span at 1-31 (MSDAEEQEYEEEQPEEEEAAEEEEAPEEPEP) shows a compositional bias: acidic residues. 3 disordered regions span residues 1–59 (MSDA…PEGE), 107–153 (RAER…KKKV), and 165–197 (LVKA…NIDH). The residue at position 2 (serine 2) is a Phosphoserine; by CK2. Residues 32-41 (VAEREEERPK) are compositionally biased toward basic and acidic residues. Over residues 43–55 (SRPVVPPLIPPKI) the composition is skewed to pro residues. 2 stretches are compositionally biased toward basic and acidic residues: residues 107-149 (RAER…DDAK) and 177-197 (TGRE…NIDH).

This sequence belongs to the troponin T family. In terms of assembly, interacts with TPM3.

Troponin T is the tropomyosin-binding subunit of troponin, the thin filament regulatory complex which confers calcium-sensitivity to striated muscle actomyosin ATPase activity. The polypeptide is Troponin T, slow skeletal muscle (TNNT1) (Sus scrofa (Pig)).